The primary structure comprises 565 residues: Periplasmic trehalase (565 aa).

Positions 1-30 (MKSPAPSRPQKMALIPACIFLCFAALSVQA) are cleaved as a signal peptide. Residues Arg152, 159–160 (WD), Asn196, 205–207 (RSQ), 277–279 (RPE), and Gly310 each bind substrate. Catalysis depends on proton donor/acceptor residues Asp312 and Glu496. Glu511 provides a ligand contact to substrate. Residues 538–565 (PCDNVPATRPTVKSATTQPSTKEAQPTP) are disordered. Polar residues predominate over residues 548–565 (TVKSATTQPSTKEAQPTP).

It belongs to the glycosyl hydrolase 37 family. Monomer.

The protein localises to the periplasm. The enzyme catalyses alpha,alpha-trehalose + H2O = alpha-D-glucose + beta-D-glucose. In terms of biological role, provides the cells with the ability to utilize trehalose at high osmolarity by splitting it into glucose molecules that can subsequently be taken up by the phosphotransferase-mediated uptake system. This chain is Periplasmic trehalase, found in Escherichia coli O139:H28 (strain E24377A / ETEC).